Reading from the N-terminus, the 395-residue chain is GA-binding protein subunit beta-1 (395 aa).

The residue at position 2 (S2) is an N-acetylserine. 2 ANK repeats span residues 5-34 (DLGK…PFTT) and 37-66 (LGTS…SRDA). K69 bears the N6-acetyllysine mark. ANK repeat units follow at residues 70 to 99 (VDRT…DVNA), 103 to 132 (LKMT…DVHT), and 136 to 166 (FCKT…QINT). The segment at 258-327 (DGAIQQVVSS…ETVISEEPPA (70 aa)) is transcription activation and HCFC1 interaction. 2 positions are modified to N6-acetyllysine: K352 and K381.

As to quaternary structure, heterotetramer of two alpha and two beta subunits. Interacts with HCFC1, causing repression of transcriptional activity. In terms of processing, acetylated by EP300/p300. Deacetylated by SIRT7, promoting heterotetramerization and activity.

The protein resides in the nucleus. In terms of biological role, transcription factor capable of interacting with purine rich repeats (GA repeats). Acts as a master regulator of nuclear-encoded mitochondrial genes. (Microbial infection) Necessary for the expression of the Adenovirus E4 gene. This is GA-binding protein subunit beta-1 (GABPB1) from Homo sapiens (Human).